The chain runs to 217 residues: Adapter protein MecA (217 aa).

It belongs to the MecA family. Homodimer.

Its function is as follows. Enables the recognition and targeting of unfolded and aggregated proteins to the ClpC protease or to other proteins involved in proteolysis. This is Adapter protein MecA from Listeria innocua serovar 6a (strain ATCC BAA-680 / CLIP 11262).